The primary structure comprises 54 residues: Ribulose bisphosphate carboxylase large chain (54 aa).

The propeptide occupies 1 to 2 (MS). Residue Pro-3 is modified to N-acetylproline. Lys-14 is modified (N6,N6,N6-trimethyllysine).

It belongs to the RuBisCO large chain family. Type I subfamily. In terms of assembly, heterohexadecamer of 8 large chains and 8 small chains.

The protein resides in the plastid. It localises to the chloroplast. It carries out the reaction 2 (2R)-3-phosphoglycerate + 2 H(+) = D-ribulose 1,5-bisphosphate + CO2 + H2O. The catalysed reaction is D-ribulose 1,5-bisphosphate + O2 = 2-phosphoglycolate + (2R)-3-phosphoglycerate + 2 H(+). Functionally, ruBisCO catalyzes two reactions: the carboxylation of D-ribulose 1,5-bisphosphate, the primary event in carbon dioxide fixation, as well as the oxidative fragmentation of the pentose substrate in the photorespiration process. Both reactions occur simultaneously and in competition at the same active site. The chain is Ribulose bisphosphate carboxylase large chain (rbcL) from Ilex aquifolium (English holly).